The primary structure comprises 206 residues: Guanylate kinase (206 aa).

The Guanylate kinase-like domain occupies 5–184; it reads GMLIVLSGPS…AAERIKAIIR (180 aa). 12 to 19 is an ATP binding site; that stretch reads GPSGVGKG.

The protein belongs to the guanylate kinase family.

It localises to the cytoplasm. The enzyme catalyses GMP + ATP = GDP + ADP. Essential for recycling GMP and indirectly, cGMP. The protein is Guanylate kinase of Lactiplantibacillus plantarum (strain ATCC BAA-793 / NCIMB 8826 / WCFS1) (Lactobacillus plantarum).